We begin with the raw amino-acid sequence, 595 residues long: Immediate-early protein 1 (595 aa).

A disordered region spans residues 384–595 (HNRSAPSPQG…QQQPKKKSKK (212 aa)). A compositionally biased stretch (low complexity) spans 392-401 (QGVIEEQQQA). 3 stretches are compositionally biased toward acidic residues: residues 402–416 (GEEEQQQQQEIEYDP), 423–443 (REEEQEDEQVEEEPPADEEEG), and 454–467 (PAGEATEEAEEDES). Over residues 469–484 (PGPSDNQVVPESSETP) the composition is skewed to polar residues. A compositionally biased stretch (acidic residues) spans 487-502 (AEDEETQSADEGESQE). The segment covering 503–512 (LEGSQQLILS) has biased composition (low complexity). A compositionally biased stretch (acidic residues) spans 521 to 532 (SETDSDSEDDDE). The span at 550–567 (PTTRSATAAASSGTAPRP) shows a compositional bias: low complexity.

It is found in the host nucleus. The IE1 protein has some additive effect on the trans-activating properties of the IE3 protein. The chain is Immediate-early protein 1 (IE1) from Mus musculus (Mouse).